A 286-amino-acid chain; its full sequence is General stress protein 39 (286 aa).

Positions 1-26 (MANYPKELPAQTQSRQPGIESEMNPS) are disordered. Residue 46–70 (LITGGDSGIGRAVSVAYAKEGADIA) participates in NAD(+) binding. Substrate is bound at residue S178. Y191 serves as the catalytic Proton acceptor.

It belongs to the short-chain dehydrogenases/reductases (SDR) family.

This Bacillus subtilis (strain 168) protein is General stress protein 39 (ydaD).